Here is a 980-residue protein sequence, read N- to C-terminus: Envelope glycoprotein B (980 aa).

Residues 1–14 (MSSGCRSVGGSTWG) show a composition bias toward polar residues. 2 disordered regions span residues 1 to 20 (MSSGCRSVGGSTWGNWRGDG) and 88 to 118 (TTPSPPTSTPTSMSTHSHGTVDPTLLPTETP). Residues 1 to 86 (MSSGCRSVGG…LFGSCVVRAV (86 aa)) form the signal peptide. The Virion surface portion of the chain corresponds to 87–849 (PTTPSPPTST…SGIASFLNNP (763 aa)). Residues 96 to 118 (TPTSMSTHSHGTVDPTLLPTETP) show a composition bias toward low complexity. Cystine bridges form between cysteine 140–cysteine 647, cysteine 157–cysteine 603, cysteine 231–cysteine 296, cysteine 389–cysteine 437, and cysteine 668–cysteine 708. The N-linked (GlcNAc...) asparagine; by host glycan is linked to asparagine 165. Residues 197-203 (VWKGYSH) form an involved in fusion and/or binding to host membrane region. Asparagine 275 is a glycosylation site (N-linked (GlcNAc...) asparagine; by host). The segment at 282–290 (GWMPWRHYT) is involved in fusion and/or binding to host membrane. N-linked (GlcNAc...) asparagine; by host glycosylation is found at asparagine 380, asparagine 423, asparagine 497, asparagine 514, asparagine 515, and asparagine 560. Over residues 505-516 (LLNPNANNNNNT) the composition is skewed to low complexity. The segment at 505–535 (LLNPNANNNNNTTRRRRSLLSVPEPQPTQDG) is disordered. Asparagine 727 and asparagine 749 each carry an N-linked (GlcNAc...) asparagine; by host glycan. Hydrophobic membrane proximal region regions lie at residues 794 to 847 (IDSV…SFLN) and 823 to 843 (AVGTLVLGAAGAVVSTVSGIA). Residues 850 to 870 (FGGLAIGLLVIAGLVAAFFAY) traverse the membrane as a helical segment. The Intravirion portion of the chain corresponds to 871–980 (RYVMQIRSNP…NDTMENEKMV (110 aa)). The short motif at 925 to 928 (YMSM) is the Golgi targeting element. An Internalization motif motif is present at residues 965-968 (YTRL).

Belongs to the herpesviridae glycoprotein B family. As to quaternary structure, homotrimer; disulfide-linked. Binds to heparan sulfate proteoglycans. Interacts with gH/gL heterodimer. In terms of processing, a proteolytic cleavage by host furin generates two subunits that remain linked by disulfide bonds.

Its subcellular location is the virion membrane. It is found in the host cell membrane. It localises to the host endosome membrane. The protein localises to the host Golgi apparatus membrane. In terms of biological role, envelope glycoprotein that forms spikes at the surface of virion envelope. Essential for the initial attachment to heparan sulfate moieties of the host cell surface proteoglycans. Involved in fusion of viral and cellular membranes leading to virus entry into the host cell. Following initial binding to its host receptors, membrane fusion is mediated by the fusion machinery composed at least of gB and the heterodimer gH/gL. May be involved in the fusion between the virion envelope and the outer nuclear membrane during virion egress. The protein is Envelope glycoprotein B of Equus caballus (Horse).